A 427-amino-acid chain; its full sequence is 3-phosphoshikimate 1-carboxyvinyltransferase (427 aa).

3 residues coordinate 3-phosphoshikimate: Lys-22, Ser-23, and Arg-27. Lys-22 contacts phosphoenolpyruvate. Phosphoenolpyruvate-binding residues include Gly-96 and Arg-124. Positions 169, 170, 171, 197, 313, 336, and 340 each coordinate 3-phosphoshikimate. Residue Gln-171 coordinates phosphoenolpyruvate. Asp-313 serves as the catalytic Proton acceptor. Phosphoenolpyruvate is bound by residues Arg-344, Arg-386, and Lys-411.

The protein belongs to the EPSP synthase family. Monomer.

The protein resides in the cytoplasm. It catalyses the reaction 3-phosphoshikimate + phosphoenolpyruvate = 5-O-(1-carboxyvinyl)-3-phosphoshikimate + phosphate. The protein operates within metabolic intermediate biosynthesis; chorismate biosynthesis; chorismate from D-erythrose 4-phosphate and phosphoenolpyruvate: step 6/7. Its function is as follows. Catalyzes the transfer of the enolpyruvyl moiety of phosphoenolpyruvate (PEP) to the 5-hydroxyl of shikimate-3-phosphate (S3P) to produce enolpyruvyl shikimate-3-phosphate and inorganic phosphate. In Salmonella paratyphi A (strain ATCC 9150 / SARB42), this protein is 3-phosphoshikimate 1-carboxyvinyltransferase.